Consider the following 356-residue polypeptide: 3,4-dihydroxy-2-butanone 4-phosphate synthase (356 aa).

Residues methionine 1–methionine 211 are DHBP synthase. D-ribulose 5-phosphate-binding positions include arginine 38–glutamate 39, aspartate 43, arginine 150–threonine 154, and glutamate 174. A Mg(2+)-binding site is contributed by glutamate 39. Position 153 (histidine 153) interacts with Mg(2+). Positions asparagine 212–alanine 356 are GTP cyclohydrolase II-like.

The protein in the N-terminal section; belongs to the DHBP synthase family. It in the C-terminal section; belongs to the GTP cyclohydrolase II family. Mg(2+) serves as cofactor. Requires Mn(2+) as cofactor.

It catalyses the reaction D-ribulose 5-phosphate = (2S)-2-hydroxy-3-oxobutyl phosphate + formate + H(+). It functions in the pathway cofactor biosynthesis; riboflavin biosynthesis; 2-hydroxy-3-oxobutyl phosphate from D-ribulose 5-phosphate: step 1/1. Catalyzes the conversion of D-ribulose 5-phosphate to formate and 3,4-dihydroxy-2-butanone 4-phosphate. In Sulfurospirillum multivorans (Dehalospirillum multivorans), this protein is 3,4-dihydroxy-2-butanone 4-phosphate synthase (ribB).